The primary structure comprises 448 residues: Tubulin beta chain (448 aa).

8 residues coordinate GTP: Gln11, Glu69, Ser138, Gly142, Thr143, Gly144, Asn204, and Asn226. Glu69 serves as a coordination point for Mg(2+).

Belongs to the tubulin family. Dimer of alpha and beta chains. A typical microtubule is a hollow water-filled tube with an outer diameter of 25 nm and an inner diameter of 15 nM. Alpha-beta heterodimers associate head-to-tail to form protofilaments running lengthwise along the microtubule wall with the beta-tubulin subunit facing the microtubule plus end conferring a structural polarity. Microtubules usually have 13 protofilaments but different protofilament numbers can be found in some organisms and specialized cells. Mg(2+) serves as cofactor.

It localises to the cytoplasm. Its subcellular location is the cytoskeleton. Tubulin is the major constituent of microtubules, a cylinder consisting of laterally associated linear protofilaments composed of alpha- and beta-tubulin heterodimers. Microtubules grow by the addition of GTP-tubulin dimers to the microtubule end, where a stabilizing cap forms. Below the cap, tubulin dimers are in GDP-bound state, owing to GTPase activity of alpha-tubulin. In Melampsora lini (Rust fungus), this protein is Tubulin beta chain (TUB1).